The following is a 394-amino-acid chain: uncharacterized protein (394 aa).

Phosphoserine is present on residues serine 117 and serine 121. Disordered stretches follow at residues 177-295 (DSDE…PGTF), 315-347 (KRSI…GSLS), and 370-394 (SSEV…AHRV). Residues 178–190 (SDEEDEVDDEEIE) show a composition bias toward acidic residues. Composition is skewed to polar residues over residues 191–207 (SFNS…NSRY) and 216–230 (EKQS…VSQI). Acidic residues-rich tracts occupy residues 231–263 (SDDE…DDED) and 284–295 (IPDDTDFVPGTF). Over residues 370–379 (SSEVLRNSKS) the composition is skewed to polar residues. Serine 379 carries the phosphoserine modification.

It localises to the nucleus. This is an uncharacterized protein from Schizosaccharomyces pombe (strain 972 / ATCC 24843) (Fission yeast).